The primary structure comprises 647 residues: DNA ligase (647 aa).

NAD(+) is bound by residues 30–34 (DEEYD), 79–80 (SM), and E105. K107 (N6-AMP-lysine intermediate) is an active-site residue. Residues R128, E162, and K301 each contribute to the NAD(+) site. The Zn(2+) site is built by C395, C398, C411, and C416. The BRCT domain maps to 570–647 (KSDGVIFGKT…ESAFNELVKE (78 aa)).

Belongs to the NAD-dependent DNA ligase family. LigA subfamily. It depends on Mg(2+) as a cofactor. Mn(2+) is required as a cofactor.

It catalyses the reaction NAD(+) + (deoxyribonucleotide)n-3'-hydroxyl + 5'-phospho-(deoxyribonucleotide)m = (deoxyribonucleotide)n+m + AMP + beta-nicotinamide D-nucleotide.. DNA ligase that catalyzes the formation of phosphodiester linkages between 5'-phosphoryl and 3'-hydroxyl groups in double-stranded DNA using NAD as a coenzyme and as the energy source for the reaction. It is essential for DNA replication and repair of damaged DNA. The sequence is that of DNA ligase from Campylobacter jejuni subsp. jejuni serotype O:2 (strain ATCC 700819 / NCTC 11168).